The primary structure comprises 360 residues: Methylthioribose-1-phosphate isomerase (360 aa).

D252 serves as the catalytic Proton donor.

Belongs to the eIF-2B alpha/beta/delta subunits family. MtnA subfamily.

The protein resides in the cytoplasm. It is found in the nucleus. It carries out the reaction 5-(methylsulfanyl)-alpha-D-ribose 1-phosphate = 5-(methylsulfanyl)-D-ribulose 1-phosphate. Its pathway is amino-acid biosynthesis; L-methionine biosynthesis via salvage pathway; L-methionine from S-methyl-5-thio-alpha-D-ribose 1-phosphate: step 1/6. Catalyzes the interconversion of methylthioribose-1-phosphate (MTR-1-P) into methylthioribulose-1-phosphate (MTRu-1-P). This chain is Methylthioribose-1-phosphate isomerase, found in Trichoplax adhaerens (Trichoplax reptans).